The following is a 325-amino-acid chain: Natural cytotoxicity triggering receptor 1 (325 aa).

The signal sequence occupies residues M1–S16. Residues Q17–R258 lie on the Extracellular side of the membrane. 2 Ig-like domains span residues G42–Y100 and G137–G192. An intrachain disulfide couples C49 to C98. An N-linked (GlcNAc...) asparagine glycan is attached at N139. A disulfide bridge connects residues C144 and C190. A glycan (N-linked (GlcNAc...) asparagine) is linked at N216. A helical transmembrane segment spans residues I259–S279. At R280–M325 the chain is on the cytoplasmic side.

Belongs to the natural cytotoxicity receptor (NCR) family. As to quaternary structure, interacts with CD3Z and FCER1G. In terms of tissue distribution, weakly expressed in spleen, heart and lung.

The protein localises to the cell membrane. Cytotoxicity-activating receptor that may contribute to the increased efficiency of activated natural killer (NK) cells to mediate tumor cell lysis. The protein is Natural cytotoxicity triggering receptor 1 (Ncr1) of Rattus norvegicus (Rat).